We begin with the raw amino-acid sequence, 258 residues long: Acyl-[acyl-carrier-protein]--UDP-N-acetylglucosamine O-acyltransferase (258 aa).

It belongs to the transferase hexapeptide repeat family. LpxA subfamily. In terms of assembly, homotrimer.

It is found in the cytoplasm. It carries out the reaction a (3R)-hydroxyacyl-[ACP] + UDP-N-acetyl-alpha-D-glucosamine = a UDP-3-O-[(3R)-3-hydroxyacyl]-N-acetyl-alpha-D-glucosamine + holo-[ACP]. Its pathway is glycolipid biosynthesis; lipid IV(A) biosynthesis; lipid IV(A) from (3R)-3-hydroxytetradecanoyl-[acyl-carrier-protein] and UDP-N-acetyl-alpha-D-glucosamine: step 1/6. In terms of biological role, involved in the biosynthesis of lipid A, a phosphorylated glycolipid that anchors the lipopolysaccharide to the outer membrane of the cell. The protein is Acyl-[acyl-carrier-protein]--UDP-N-acetylglucosamine O-acyltransferase of Pseudomonas fluorescens (strain SBW25).